Consider the following 370-residue polypeptide: Metalloproteinase (370 aa).

A signal peptide spans 1 to 15 (MYLAYIFFLFATVSA). A Peptidase M12B domain is found at 170–370 (IVIEVLLVTD…DNYGKIFRMF (201 aa)). N-linked (GalNAc...) asparagine glycosylation occurs at Asn-226. His-320 contacts Zn(2+). Residue Glu-321 is part of the active site. Residues His-324 and His-330 each contribute to the Zn(2+) site.

Belongs to the venom metalloproteinase (M12B) family. In terms of tissue distribution, expressed by the venom gland.

The protein localises to the secreted. Functionally, metalloprotease that may disrupt the cell matrix and the process of clotting blood or hemolymph. The protein is Metalloproteinase of Tityus obscurus (Amazonian scorpion).